Consider the following 729-residue polypeptide: Adenosylcobalamin-dependent ribonucleoside-triphosphate reductase (729 aa).

An intrachain disulfide couples Cys189 to Cys438. Catalysis depends on residues Cys427 and Glu429.

The protein belongs to the class II ribonucleoside-triphosphate reductase family. As to quaternary structure, monomer. Requires adenosylcob(III)alamin as cofactor.

It carries out the reaction a 2'-deoxyribonucleoside 5'-triphosphate + [thioredoxin]-disulfide + H2O = a ribonucleoside 5'-triphosphate + [thioredoxin]-dithiol. The protein is Adenosylcobalamin-dependent ribonucleoside-triphosphate reductase (rnr) of Euglena gracilis.